The sequence spans 396 residues: MIISAASDYRAAAQRTLPPFLFHYIDGGAYAEYTLRRNVEDLSQVALRQRVLKNMSDLSLETTLFNETLSMPVALAPVGLCGMYARRGEVQAAAAADAKGIPFTLSTVSVCPIEEVAPTIKRPMWFQLYVLRDRGFMRNALERAKAAGCSTLVFTVDMPTPGARYRDAHSGMSGPNAAMRRYWQAVMHPKWAWDVGLNGRPHDLGNISAYLGKPTGLEDYIGWLANNFDPSISWKDLEWIREFWDGPMVIKGILDPEDARDAVRFGADGIVVSNHGGRQLDGVLSSARALPAIADAVKGDIAILADSGIRNGLDVVRMIALGADTVLLGRAYLYALATAGKAGVANLLDLIEKEMKVAMTLTGAKSISEISGDSLVQELGKSLPTALAPMSKGDAA.

Residues 1-380 enclose the FMN hydroxy acid dehydrogenase domain; sequence MIISAASDYR…SGDSLVQELG (380 aa). Tyrosine 24 contributes to the substrate binding site. FMN is bound by residues serine 106 and glutamine 127. Tyrosine 129 provides a ligand contact to substrate. FMN is bound at residue threonine 155. Arginine 164 contributes to the substrate binding site. Lysine 251 contacts FMN. The active-site Proton acceptor is histidine 275. Residue arginine 278 participates in substrate binding. Residue 306–330 coordinates FMN; the sequence is DSGIRNGLDVVRMIALGADTVLLGR.

This sequence belongs to the FMN-dependent alpha-hydroxy acid dehydrogenase family. Requires FMN as cofactor.

The protein resides in the cell inner membrane. It carries out the reaction (S)-lactate + A = pyruvate + AH2. Its function is as follows. Catalyzes the conversion of L-lactate to pyruvate. Is coupled to the respiratory chain. In Salmonella paratyphi B (strain ATCC BAA-1250 / SPB7), this protein is L-lactate dehydrogenase.